A 138-amino-acid polypeptide reads, in one-letter code: Basic phospholipase A2 trimucrotoxin (138 aa).

The N-terminal stretch at 1–16 (MRTLWIVAVLLLGVEG) is a signal peptide. Cystine bridges form between cysteine 42/cysteine 131, cysteine 44/cysteine 60, cysteine 59/cysteine 111, cysteine 65/cysteine 138, cysteine 66/cysteine 104, cysteine 73/cysteine 97, and cysteine 91/cysteine 102. Ca(2+)-binding residues include tyrosine 43, glycine 45, and glycine 47. The active site involves histidine 63. A Ca(2+)-binding site is contributed by aspartate 64. Aspartate 105 is an active-site residue.

Belongs to the phospholipase A2 family. Group II subfamily. D49 sub-subfamily. In terms of assembly, homodimer. It depends on Ca(2+) as a cofactor. Expressed by the venom gland.

The protein localises to the secreted. It carries out the reaction a 1,2-diacyl-sn-glycero-3-phosphocholine + H2O = a 1-acyl-sn-glycero-3-phosphocholine + a fatty acid + H(+). Its function is as follows. Snake venom phospholipase A2 (PLA2) that displays edema-inducing activities, as well as presynaptic neurotoxicity and low myotoxicity. PLA2 catalyzes the calcium-dependent hydrolysis of the 2-acyl groups in 3-sn-phosphoglycerides. The protein is Basic phospholipase A2 trimucrotoxin of Protobothrops mucrosquamatus (Taiwan habu).